Here is a 116-residue protein sequence, read N- to C-terminus: Orphan antitoxin YagB (116 aa).

It belongs to the CbeA/YafW/YfjZ antitoxin family.

In terms of biological role, putative antitoxin component of a type IV toxin-antitoxin (TA) system; its cognate toxin is unknown. The sequence is that of Orphan antitoxin YagB (yagB) from Escherichia coli (strain K12).